The primary structure comprises 917 residues: MFARLVRSIFGSSNDRSLRGYQRRVQQINALEPELAALTDAELQARTILLKQKLADGATLDGILPEAFAIVREASKRVFGMRHFDVQLIGGMVLHDGKIAEMRTGEGKTLVATLPVYLNALTGKGVHVVTVNDYLARRDAETMGQLYSFLGLSTGIVVHGQEELERRAAYHADITYGTNNEFGFDYLRDNMKYRLEDMVQRDFTYAIVDEVDSILIDEARTPLIISGPAEDSSNLYRSVDAVVRELVKDPAAFEKDEKQRSVHLTEAGSEKVEEMLHASGILTDGNLYDTFNITVLHHVQQSLRAHTLFERNVEYIVRDDKVIIIDEFTGRMMDGRRYSEGLHQALEAKEHVTVQQENQTLASITFQNYFRMYPKLAGMTGTALTEADEFAEIYKLDVLAVPTNLPVQRKDGDDEVYRTAREKYEAVANLIEEIRTRGQPVLVGTTSIEKSEVIKQLLDQKRIPAELLNAKQHEREAIIVAEAGAPGRVTIATNMAGRGTDIKLGGNAEARIQTELADMPEGPERDAAIARIEQEVQEAHEAVRKAGGLFVIGTERHESRRIDNQLRGRSGRQGDPGESRFFLSLEDDLMRIFGSDRMGAMLQRLGLKDGEAIIHPWINKALEKAQKKVEARNFDMRKNVLKYDDVMNDQRKEVYAQRREFMNADDVSETVADMREEVIDTLITRHIPERAFQEQWDTAGLAAGLRALLNADIPVEQWGREEGVDEAEMRRRVQAAATELMDVKAAHAGADAMRYIEKALLLQTLDQVWKEHLLLLDQLRQGIGLRAYGQRDPLNEYKSEAFSLFNAMLDELKQRVTAILAQVEFGAPPPASADPFVSGSSQFVESHPEPVSIRMAVGPNGEDIPLPPPPPAMFSAAYADVEGIDFNDPSTWINVPRNAPCPCGSGQKYKHCHGRLG.

Residues glutamine 87, 105–109 (GEGKT), and aspartate 501 each bind ATP. Positions 901, 903, 912, and 913 each coordinate Zn(2+).

This sequence belongs to the SecA family. As to quaternary structure, monomer and homodimer. Part of the essential Sec protein translocation apparatus which comprises SecA, SecYEG and auxiliary proteins SecDF-YajC and YidC. It depends on Zn(2+) as a cofactor.

It localises to the cell inner membrane. It is found in the cytoplasm. It catalyses the reaction ATP + H2O + cellular proteinSide 1 = ADP + phosphate + cellular proteinSide 2.. Part of the Sec protein translocase complex. Interacts with the SecYEG preprotein conducting channel. Has a central role in coupling the hydrolysis of ATP to the transfer of proteins into and across the cell membrane, serving both as a receptor for the preprotein-SecB complex and as an ATP-driven molecular motor driving the stepwise translocation of polypeptide chains across the membrane. This chain is Protein translocase subunit SecA, found in Granulibacter bethesdensis (strain ATCC BAA-1260 / CGDNIH1).